The primary structure comprises 434 residues: [Pyruvate dehydrogenase (acetyl-transferring)] kinase isozyme 1, mitochondrial (434 aa).

The transit peptide at 1-26 directs the protein to the mitochondrion; sequence MRLARLLRGGTSVRPLCAVPCASRSL. Residue tyrosine 136 is modified to Phosphotyrosine; by FGFR1. In terms of domain architecture, Histidine kinase spans 161-391; sequence TEYKESFGVD…DAVIYIKALS (231 aa). Residue tyrosine 241 is modified to Phosphotyrosine; by FGFR1, ABL1, FLT3 and JAK2. At tyrosine 242 the chain carries Phosphotyrosine; by FGFR1. ATP-binding positions include 277–284, aspartate 316, 335–336, and 352–357; these read ELFKNAMR, ST, and GFGYGL. Threonine 336 carries the phosphothreonine modification. Residue lysine 403 is modified to N6-succinyllysine.

This sequence belongs to the PDK/BCKDK protein kinase family. In terms of assembly, homodimer, and heterodimer with PDK2. Interacts with the pyruvate dehydrogenase complex subunit DLAT, and is part of the multimeric pyruvate dehydrogenase complex that contains multiple copies of pyruvate dehydrogenase (E1), dihydrolipoamide acetyltransferase (DLAT, E2) and lipoamide dehydrogenase (DLD, E3). Interacts with phosphoglycerate kinase PGK1; the interaction is direct, occurs under hypoxic conditions and leads to PDK1-mediated inhibition of pyruvate dehydrogenase complex activity. In terms of processing, phosphorylated by constitutively activated ABL1, FGFR1, FLT3 and JAK2 (in vitro), and this may also occur in cancer cells that express constitutively activated ABL1, FGFR1, FLT3 and JAK2. Phosphorylation at Tyr-241 and Tyr-242 strongly increases kinase activity, while phosphorylation at Tyr-136 has a lesser effect. Phosphorylated under hypoxic conditions at Thr-336 by phosphoglycerate kinase PGK1 which has an activating effect. As to expression, detected in pancreas islets (at protein level). Expressed predominantly in the heart.

The protein localises to the mitochondrion matrix. It catalyses the reaction L-seryl-[pyruvate dehydrogenase E1 alpha subunit] + ATP = O-phospho-L-seryl-[pyruvate dehydrogenase E1 alpha subunit] + ADP + H(+). With respect to regulation, activated by binding to the pyruvate dehydrogenase complex subunit DLAT. Strongly activated by NADH plus acetyl-coenzyme A. Inhibited by dichloroacetate. Functionally, kinase that plays a key role in regulation of glucose and fatty acid metabolism and homeostasis via phosphorylation of the pyruvate dehydrogenase subunits PDHA1 and PDHA2. This inhibits pyruvate dehydrogenase activity, and thereby regulates metabolite flux through the tricarboxylic acid cycle, down-regulates aerobic respiration and inhibits the formation of acetyl-coenzyme A from pyruvate. Plays an important role in cellular responses to hypoxia and is important for cell proliferation under hypoxia. In Rattus norvegicus (Rat), this protein is [Pyruvate dehydrogenase (acetyl-transferring)] kinase isozyme 1, mitochondrial (Pdk1).